Consider the following 261-residue polypeptide: Ribosome-inactivating protein PD-L3/PD-L4 (261 aa).

A glycan (N-linked (GlcNAc...) asparagine; in PD-L3) is linked at Asn10. 2 disulfide bridges follow: Cys34/Cys258 and Cys84/Cys105. Glu175 is a catalytic residue.

The protein belongs to the ribosome-inactivating protein family. Type 1 RIP subfamily.

The enzyme catalyses Endohydrolysis of the N-glycosidic bond at one specific adenosine on the 28S rRNA.. Inhibits protein synthesis. Does not cleave supercoiled pBR322 dsDNA. This is Ribosome-inactivating protein PD-L3/PD-L4 from Phytolacca dioica (Bella sombra tree).